Here is a 910-residue protein sequence, read N- to C-terminus: Protein translocase subunit SecA (910 aa).

Residues Gln87, 105 to 109 (GEGKT), and Asp501 each bind ATP. Zn(2+) is bound by residues Cys894, Cys896, Cys905, and His906.

This sequence belongs to the SecA family. Monomer and homodimer. Part of the essential Sec protein translocation apparatus which comprises SecA, SecYEG and auxiliary proteins SecDF-YajC and YidC. It depends on Zn(2+) as a cofactor.

The protein localises to the cell inner membrane. It localises to the cytoplasm. It catalyses the reaction ATP + H2O + cellular proteinSide 1 = ADP + phosphate + cellular proteinSide 2.. In terms of biological role, part of the Sec protein translocase complex. Interacts with the SecYEG preprotein conducting channel. Has a central role in coupling the hydrolysis of ATP to the transfer of proteins into and across the cell membrane, serving both as a receptor for the preprotein-SecB complex and as an ATP-driven molecular motor driving the stepwise translocation of polypeptide chains across the membrane. This is Protein translocase subunit SecA from Acidiphilium cryptum (strain JF-5).